We begin with the raw amino-acid sequence, 280 residues long: Protein IMPACT homolog (280 aa).

Positions 9-109 constitute an RWD domain; sequence DELLALESIY…QAAAERESKL (101 aa).

It belongs to the IMPACT family. As to quaternary structure, interacts (via N-terminus) with gcn1 (via C-terminus); this interaction reduces the gcn1-gcn20 complex formation and prevents the interaction of gcn1 with gcn2 protein kinase and gcn2 activation in amino acid-starved cells. Interacts (via C-terminus) with act1; this interaction occurs in a gcn1-independent manner. Interacts with rpl39; this interaction occurs in a gcn1-independent manner. Associates (via middle region) with ribosomes; this association occurs in a gcn1-independent manner and persists under amino acid starvation conditions.

The protein resides in the cytoplasm. The protein localises to the nucleus. In terms of biological role, translational regulator that ensures constant high levels of translation under amino acid starvation. Plays a role as a negative regulator of the gcn2 kinase activity; impairs gcn1-mediated gcn2 activation, and hence gcn2-mediated eIF-2-alpha phosphorylation in amino acid-starved cells and subsequent down-regulation of protein synthesis. In normal conditions, it resides in a actin complex and has no activity. In Schizosaccharomyces pombe (strain 972 / ATCC 24843) (Fission yeast), this protein is Protein IMPACT homolog (yih1).